The chain runs to 62 residues: uncharacterized protein (62 aa).

This is an uncharacterized protein from His1 virus (isolate Australia/Victoria) (His1V).